A 447-amino-acid polypeptide reads, in one-letter code: NADH-quinone oxidoreductase subunit F (447 aa).

61–70 (GRGGAGFSTG) lines the NAD(+) pocket. 174–221 (GAGRYICGEETALINSLEGRRANPRAKPPFPAVFGLWGKPTCVNNVET) is an FMN binding site. 4 residues coordinate [4Fe-4S] cluster: cysteine 352, cysteine 355, cysteine 358, and cysteine 399.

The protein belongs to the complex I 51 kDa subunit family. In terms of assembly, composed of 13 different subunits. Subunits NuoCD, E, F, and G constitute the peripheral sector of the complex. It depends on [4Fe-4S] cluster as a cofactor. FMN serves as cofactor.

The catalysed reaction is a quinone + NADH + 5 H(+)(in) = a quinol + NAD(+) + 4 H(+)(out). NDH-1 shuttles electrons from NADH, via FMN and iron-sulfur (Fe-S) centers, to quinones in the respiratory chain. Couples the redox reaction to proton translocation (for every two electrons transferred, four hydrogen ions are translocated across the cytoplasmic membrane), and thus conserves the redox energy in a proton gradient. The chain is NADH-quinone oxidoreductase subunit F (nuoF) from Buchnera aphidicola subsp. Schizaphis graminum (strain Sg).